Consider the following 1940-residue polypeptide: Cilia- and flagella-associated protein 74 (1940 aa).

A disordered region spans residues 52-90 (GSPAVTLRRAKAAAAANGTSSPGIRGSPSPARGPGGRLP). Residues 63 to 90 (AAAAANGTSSPGIRGSPSPARGPGGRLP) show a composition bias toward low complexity. Positions 100–159 (ANVEQLKRRLQTVVAEVEGHQQRYDKVLLEANKATDLVHSMEAEIESLYVEAEELARRVP) form a coiled coil. Disordered regions lie at residues 512 to 548 (VAGL…QSLT), 1159 to 1336 (SPHV…AAAE), 1373 to 1418 (PQSQ…AAPP), 1714 to 1737 (AGDK…GASK), and 1894 to 1940 (PGSR…KKAV). The span at 535 to 548 (SLTQQLAATQQSLT) shows a compositional bias: low complexity. Gly residues predominate over residues 1205–1220 (DGGGGGAMANGNGSGG). Over residues 1227–1236 (DGEPEDGEGD) the composition is skewed to acidic residues. A compositionally biased stretch (gly residues) spans 1260–1271 (GRGGRGGRGGAA). The segment covering 1272–1282 (GEDEDEDEDAG) has biased composition (acidic residues). The segment covering 1287–1304 (RGKSSSSSKASSGRRSSS) has biased composition (low complexity). A compositionally biased stretch (acidic residues) spans 1321 to 1335 (VPDDDDADAEAEAAA). The span at 1373–1414 (PQSQNPTPSQSQSGQAPAASAPSDGASGAAAAAETAASSGPA) shows a compositional bias: low complexity. Composition is skewed to pro residues over residues 1720 to 1731 (TPAPGIKPPATP) and 1896 to 1912 (SRPP…PAPE). A compositionally biased stretch (low complexity) spans 1913–1929 (PVAASGPGAGAAGVKKL). Pro residues predominate over residues 1930–1940 (VPPPSPPKKAV).

This sequence belongs to the CFAP74 family. Part of the PDCP1 complex composed of CFAP46, CFAP54, CFAP74 and CFAP221; the PDCP1 complex binds calmodulin.

It is found in the cytoplasm. The protein resides in the cytoskeleton. It localises to the cilium axoneme. In terms of biological role, as part of the central apparatus of the cilium axoneme may play a role in cilium movement and thereby cell motility. The polypeptide is Cilia- and flagella-associated protein 74 (Chlamydomonas reinhardtii (Chlamydomonas smithii)).